Consider the following 335-residue polypeptide: Ferredoxin--NADP reductase (335 aa).

FAD contacts are provided by Asp34, Gln42, Tyr47, Ala87, Phe121, Asp287, and Thr328.

This sequence belongs to the ferredoxin--NADP reductase type 2 family. As to quaternary structure, homodimer. FAD is required as a cofactor.

It catalyses the reaction 2 reduced [2Fe-2S]-[ferredoxin] + NADP(+) + H(+) = 2 oxidized [2Fe-2S]-[ferredoxin] + NADPH. The sequence is that of Ferredoxin--NADP reductase from Rickettsia felis (strain ATCC VR-1525 / URRWXCal2) (Rickettsia azadi).